The primary structure comprises 432 residues: Mitochondrial distribution and morphology protein 12 (432 aa).

In terms of domain architecture, SMP-LTD spans 1–432 (MSIEVDWRAA…VFPSFWTFLI (432 aa)). 2 disordered regions span residues 182–273 (WTDP…PRMR) and 354–377 (QQEA…PKRQ). The span at 214–234 (TSNPTSRPSTSSTLPSHPSAS) shows a compositional bias: low complexity. Basic and acidic residues-rich tracts occupy residues 243–253 (TGKEHGSLAED) and 355–364 (QEARGQDDRP).

Belongs to the MDM12 family. In terms of assembly, component of the ER-mitochondria encounter structure (ERMES) or MDM complex, composed of mmm1, mdm10, mdm12 and mdm34. A mmm1 homodimer associates with one molecule of mdm12 on each side in a pairwise head-to-tail manner, and the SMP-LTD domains of mmm1 and mdm12 generate a continuous hydrophobic tunnel for phospholipid trafficking.

The protein localises to the mitochondrion outer membrane. It is found in the endoplasmic reticulum membrane. Functionally, component of the ERMES/MDM complex, which serves as a molecular tether to connect the endoplasmic reticulum (ER) and mitochondria. Components of this complex are involved in the control of mitochondrial shape and protein biogenesis, and function in nonvesicular lipid trafficking between the ER and mitochondria. Mdm12 is required for the interaction of the ER-resident membrane protein mmm1 and the outer mitochondrial membrane-resident beta-barrel protein mdm10. The mdm12-mmm1 subcomplex functions in the major beta-barrel assembly pathway that is responsible for biogenesis of all mitochondrial outer membrane beta-barrel proteins, and acts in a late step after the SAM complex. The mdm10-mdm12-mmm1 subcomplex further acts in the TOM40-specific pathway after the action of the mdm12-mmm1 complex. Essential for establishing and maintaining the structure of mitochondria and maintenance of mtDNA nucleoids. This is Mitochondrial distribution and morphology protein 12 from Aspergillus oryzae (strain ATCC 42149 / RIB 40) (Yellow koji mold).